We begin with the raw amino-acid sequence, 355 residues long: Glucokinase (355 aa).

11–16 contributes to the ATP binding site; it reads GDIGGT.

It belongs to the bacterial glucokinase family.

It localises to the cytoplasm. It catalyses the reaction D-glucose + ATP = D-glucose 6-phosphate + ADP + H(+). This Synechocystis sp. (strain ATCC 27184 / PCC 6803 / Kazusa) protein is Glucokinase.